Consider the following 200-residue polypeptide: Pyridoxal 5'-phosphate synthase subunit PdxT (200 aa).

L-glutamine is bound at residue 46 to 48 (GES). The active-site Nucleophile is Cys78. L-glutamine contacts are provided by residues Arg107 and 138–139 (IR). Residues His175 and Glu177 each act as charge relay system in the active site.

It belongs to the glutaminase PdxT/SNO family. In terms of assembly, in the presence of PdxS, forms a dodecamer of heterodimers. Only shows activity in the heterodimer.

It carries out the reaction aldehydo-D-ribose 5-phosphate + D-glyceraldehyde 3-phosphate + L-glutamine = pyridoxal 5'-phosphate + L-glutamate + phosphate + 3 H2O + H(+). It catalyses the reaction L-glutamine + H2O = L-glutamate + NH4(+). The protein operates within cofactor biosynthesis; pyridoxal 5'-phosphate biosynthesis. In terms of biological role, catalyzes the hydrolysis of glutamine to glutamate and ammonia as part of the biosynthesis of pyridoxal 5'-phosphate. The resulting ammonia molecule is channeled to the active site of PdxS. The polypeptide is Pyridoxal 5'-phosphate synthase subunit PdxT (Corynebacterium glutamicum (strain R)).